The following is a 482-amino-acid chain: Uric acid transporter UacT (482 aa).

Residues 1–29 are Cytoplasmic-facing; sequence MSAIDSQLPSSSGQDRPTDEVDRILSPGK. The chain crosses the membrane as a helical span at residues 30–50; that stretch reads LIILGLQHVLVMYAGAVAVPL. At 51-62 the chain is on the periplasmic side; it reads MIGDRLGLSKEA. A helical membrane pass occupies residues 63–83; sequence IAMLISSDLFCCGIVTLLQCI. Over 84–92 the chain is Cytoplasmic; sequence GIGRFMGIR. Residues 93 to 113 traverse the membrane as a helical segment; the sequence is LPVIMSVTFAAVTPMIAIGMN. The Periplasmic segment spans residues 114–115; the sequence is PD. The helical transmembrane segment at 116–136 threads the bilayer; it reads IGLLGIFGATIAAGFITTLLA. Over 137 to 142 the chain is Cytoplasmic; sequence PLIGRL. Residues 143 to 163 form a helical membrane-spanning segment; sequence MPLFPPLVTGVVITSIGLSII. Over 164 to 178 the chain is Periplasmic; sequence QVGIDWAAGGKGNPQ. A helical transmembrane segment spans residues 179–199; it reads YGNPVYLGISFAVLIFILLIT. Residues 200–204 lie on the Cytoplasmic side of the membrane; it reads RYAKG. A helical transmembrane segment spans residues 205-225; sequence FMSNVAVLLGIVFGFLLSWMM. The Periplasmic portion of the chain corresponds to 226-261; sequence NEVNLSGLHDASWFAIVTPMSFGMPIFDPVSILTMT. The helical transmembrane segment at 262 to 282 threads the bilayer; sequence AVLIIVFIESMGMFLALGEIV. Over 283–337 the chain is Cytoplasmic; sequence GRKLSSHDIIRGLRVDGVGTMIGGTFNSFPHTSFSQNVGLVSVTRVHSRWVCISS. A helical transmembrane segment spans residues 338–358; that stretch reads GIILILFGMVPKMAVLVASIP. Residue Q359 is a topological domain, periplasmic. A helical transmembrane segment spans residues 360–380; that stretch reads FVLGGAGLVMFGMVLATGIRI. The Cytoplasmic segment spans residues 381–392; the sequence is LSRCNYTTNRYN. The chain crosses the membrane as a helical span at residues 393-413; the sequence is LYIVAISLGVGMTPTLSHDFF. The Periplasmic portion of the chain corresponds to 414–421; the sequence is SKLPAVLQ. The helical transmembrane segment at 422-442 threads the bilayer; that stretch reads PLLHSGIMLATLSAVVLNVFF. The Cytoplasmic segment spans residues 443–482; sequence NGYQHHADLVKESVSDKDLKVRTVRMWLLMRKLKKNEHGE.

This sequence belongs to the nucleobase:cation symporter-2 (NCS2) (TC 2.A.40) family.

Its subcellular location is the cell inner membrane. Inhibited in the presence of the protonophore carbonyl cyanide m-chlorophenyl hydrazone. Its function is as follows. Proton-dependent high-capacity transporter for uric acid. Also shows a low capacity for transport of xanthine at 37 degrees Celsius but not at 25 degrees Celsius. This Escherichia coli (strain K12) protein is Uric acid transporter UacT (uacT).